A 527-amino-acid chain; its full sequence is Putative WEB family protein At4g17210 (527 aa).

Disordered stretches follow at residues methionine 1–arginine 28 and phenylalanine 46–serine 70. Low complexity predominate over residues serine 55–aspartate 68. Coiled coils occupy residues alanine 95–isoleucine 159, serine 202–methionine 389, and lysine 436–serine 513.

Belongs to the WEB family.

The protein is Putative WEB family protein At4g17210 of Arabidopsis thaliana (Mouse-ear cress).